Here is a 123-residue protein sequence, read N- to C-terminus: UPF0102 protein PSEEN4497 (123 aa).

Belongs to the UPF0102 family.

The chain is UPF0102 protein PSEEN4497 from Pseudomonas entomophila (strain L48).